Consider the following 744-residue polypeptide: Tripartite motif-containing protein 2 (744 aa).

A Phosphoserine modification is found at S10. The RING-type zinc finger occupies 23–64 (CSICLERYKNPKVLPCLHTFCERCLQNYIPAHSLTLSCPVCR). The segment at 113-154 (GKPLSCPNHDGNVMEFYCQSCETAMCRECTEGEHAEHPTVPL) adopts a B box-type zinc-finger fold. Zn(2+) contacts are provided by C118, H121, C141, and H146. The stretch at 320 to 421 (TTNAVASETV…IRGSPFKLKV (102 aa)) is one Filamin repeat. T371 carries the post-translational modification Phosphothreonine. 3 positions are modified to phosphoserine: S375, S424, and S428. The segment at 432–462 (EGVKRRVKSPGSGHVKQKAVKRPASMYSTGK) is disordered. 6 NHL repeats span residues 473 to 516 (IFRV…FSND), 520 to 563 (KSRF…FSSD), 564 to 605 (GKFK…FQPN), 609 to 652 (VTRF…FNQE), 656 to 699 (MLKF…FDGS), and 700 to 743 (GSFL…YRYL).

The protein belongs to the TRIM/RBCC family. As to quaternary structure, forms homooligomers. Interacts with TRIM3; this interaction reduces TRIM2 activity. Interacts with myosin V; myosin V may not be a substrate for ubiquitination. Interacts with NEFL. Interacts with phosphorylated BCL2L11. Interacts with SIRPA. RING-type zinc finger-dependent and UBE2D1-dependent autoubiquitination.

It is found in the cytoplasm. The enzyme catalyses S-ubiquitinyl-[E2 ubiquitin-conjugating enzyme]-L-cysteine + [acceptor protein]-L-lysine = [E2 ubiquitin-conjugating enzyme]-L-cysteine + N(6)-ubiquitinyl-[acceptor protein]-L-lysine.. It participates in protein modification; protein ubiquitination. Functionally, UBE2D1-dependent E3 ubiquitin-protein ligase that mediates the ubiquitination of NEFL and of phosphorylated BCL2L11. Plays a neuroprotective function. May play a role in neuronal rapid ischemic tolerance. Plays a role in antiviral immunity and limits New World arenavirus infection independently of its ubiquitin ligase activity. This chain is Tripartite motif-containing protein 2 (TRIM2), found in Callithrix jacchus (White-tufted-ear marmoset).